A 95-amino-acid chain; its full sequence is UPF0213 protein YPK_3712 (95 aa).

A GIY-YIG domain is found at 4 to 79 (SLWHLYLLRT…KQLSKQQKEK (76 aa)).

It belongs to the UPF0213 family.

In Yersinia pseudotuberculosis serotype O:3 (strain YPIII), this protein is UPF0213 protein YPK_3712.